The following is a 488-amino-acid chain: UDP-N-acetylmuramate--L-alanine ligase (488 aa).

ATP is bound at residue 122–128 (GTHGKTT).

It belongs to the MurCDEF family.

The protein resides in the cytoplasm. It catalyses the reaction UDP-N-acetyl-alpha-D-muramate + L-alanine + ATP = UDP-N-acetyl-alpha-D-muramoyl-L-alanine + ADP + phosphate + H(+). It functions in the pathway cell wall biogenesis; peptidoglycan biosynthesis. Its function is as follows. Cell wall formation. This chain is UDP-N-acetylmuramate--L-alanine ligase, found in Mycobacterium marinum (strain ATCC BAA-535 / M).